A 178-amino-acid chain; its full sequence is Large ribosomal subunit protein uL6 (178 aa).

This sequence belongs to the universal ribosomal protein uL6 family. In terms of assembly, part of the 50S ribosomal subunit.

Functionally, this protein binds to the 23S rRNA, and is important in its secondary structure. It is located near the subunit interface in the base of the L7/L12 stalk, and near the tRNA binding site of the peptidyltransferase center. The chain is Large ribosomal subunit protein uL6 from Streptococcus pneumoniae serotype 19F (strain G54).